The sequence spans 110 residues: Large ribosomal subunit protein uL22 (110 aa).

It belongs to the universal ribosomal protein uL22 family. As to quaternary structure, part of the 50S ribosomal subunit.

Functionally, this protein binds specifically to 23S rRNA; its binding is stimulated by other ribosomal proteins, e.g. L4, L17, and L20. It is important during the early stages of 50S assembly. It makes multiple contacts with different domains of the 23S rRNA in the assembled 50S subunit and ribosome. Its function is as follows. The globular domain of the protein is located near the polypeptide exit tunnel on the outside of the subunit, while an extended beta-hairpin is found that lines the wall of the exit tunnel in the center of the 70S ribosome. In Glaesserella parasuis serovar 5 (strain SH0165) (Haemophilus parasuis), this protein is Large ribosomal subunit protein uL22.